The chain runs to 226 residues: Triosephosphate isomerase (226 aa).

12–14 (NFK) is a substrate binding site. His96 acts as the Electrophile in catalysis. Glu144 acts as the Proton acceptor in catalysis. Substrate contacts are provided by residues Ile149, Gly184, and 205–206 (AS).

This sequence belongs to the triosephosphate isomerase family. Homotetramer; dimer of dimers.

The protein localises to the cytoplasm. The enzyme catalyses D-glyceraldehyde 3-phosphate = dihydroxyacetone phosphate. It functions in the pathway carbohydrate biosynthesis; gluconeogenesis. The protein operates within carbohydrate degradation; glycolysis; D-glyceraldehyde 3-phosphate from glycerone phosphate: step 1/1. In terms of biological role, involved in the gluconeogenesis. Catalyzes stereospecifically the conversion of dihydroxyacetone phosphate (DHAP) to D-glyceraldehyde-3-phosphate (G3P). The sequence is that of Triosephosphate isomerase from Thermococcus kodakarensis (strain ATCC BAA-918 / JCM 12380 / KOD1) (Pyrococcus kodakaraensis (strain KOD1)).